The primary structure comprises 61 residues: Small ribosomal subunit protein uS14B (61 aa).

Residues cysteine 24, cysteine 27, cysteine 40, and cysteine 43 each contribute to the Zn(2+) site.

The protein belongs to the universal ribosomal protein uS14 family. Zinc-binding uS14 subfamily. As to quaternary structure, part of the 30S ribosomal subunit. Contacts proteins S3 and S10. It depends on Zn(2+) as a cofactor.

Functionally, binds 16S rRNA, required for the assembly of 30S particles and may also be responsible for determining the conformation of the 16S rRNA at the A site. The sequence is that of Small ribosomal subunit protein uS14B from Limosilactobacillus reuteri (strain DSM 20016) (Lactobacillus reuteri).